The chain runs to 491 residues: Protein nucleotidyltransferase YdiU (491 aa).

Residues Gly-92, Gly-94, Arg-95, Lys-115, Asp-127, Gly-128, Arg-178, and Arg-185 each contribute to the ATP site. Catalysis depends on Asp-254, which acts as the Proton acceptor. Residues Asn-255 and Asp-264 each coordinate Mg(2+). Asp-264 lines the ATP pocket.

It belongs to the SELO family. Mg(2+) is required as a cofactor. The cofactor is Mn(2+).

The enzyme catalyses L-seryl-[protein] + ATP = 3-O-(5'-adenylyl)-L-seryl-[protein] + diphosphate. It carries out the reaction L-threonyl-[protein] + ATP = 3-O-(5'-adenylyl)-L-threonyl-[protein] + diphosphate. It catalyses the reaction L-tyrosyl-[protein] + ATP = O-(5'-adenylyl)-L-tyrosyl-[protein] + diphosphate. The catalysed reaction is L-histidyl-[protein] + UTP = N(tele)-(5'-uridylyl)-L-histidyl-[protein] + diphosphate. The enzyme catalyses L-seryl-[protein] + UTP = O-(5'-uridylyl)-L-seryl-[protein] + diphosphate. It carries out the reaction L-tyrosyl-[protein] + UTP = O-(5'-uridylyl)-L-tyrosyl-[protein] + diphosphate. Functionally, nucleotidyltransferase involved in the post-translational modification of proteins. It can catalyze the addition of adenosine monophosphate (AMP) or uridine monophosphate (UMP) to a protein, resulting in modifications known as AMPylation and UMPylation. This Pseudarthrobacter chlorophenolicus (strain ATCC 700700 / DSM 12829 / CIP 107037 / JCM 12360 / KCTC 9906 / NCIMB 13794 / A6) (Arthrobacter chlorophenolicus) protein is Protein nucleotidyltransferase YdiU.